The following is a 419-amino-acid chain: Glutamyl-tRNA reductase (419 aa).

Substrate-binding positions include 49-52 (TCNR), Ser107, 112-114 (EPQ), and Gln118. Catalysis depends on Cys50, which acts as the Nucleophile. 187–192 (GAGETI) is a binding site for NADP(+).

This sequence belongs to the glutamyl-tRNA reductase family. In terms of assembly, homodimer.

The catalysed reaction is (S)-4-amino-5-oxopentanoate + tRNA(Glu) + NADP(+) = L-glutamyl-tRNA(Glu) + NADPH + H(+). It participates in porphyrin-containing compound metabolism; protoporphyrin-IX biosynthesis; 5-aminolevulinate from L-glutamyl-tRNA(Glu): step 1/2. In terms of biological role, catalyzes the NADPH-dependent reduction of glutamyl-tRNA(Glu) to glutamate 1-semialdehyde (GSA). The polypeptide is Glutamyl-tRNA reductase (Psychromonas ingrahamii (strain DSM 17664 / CCUG 51855 / 37)).